We begin with the raw amino-acid sequence, 266 residues long: MMFATNFFVTSIILLFILIFLASAIKIVKEYERAVIFRLGRVVGARGPGLFFIIPIFEKAVIVDLRTQVLDVPVQETITKDNVPVRVNAVVYFRVVDPVKAVTQVKNYIMATSQISQTTLRSVIGQAHLDELLSERDKLNMQLQRIIDEATDPWGIKVTAVEIKDVELPAGMQKAMARQAEAERERRARITLAEAERQAAEKLREAAEIISEHPMALQLRTLQTISDVAGDKSNVIVLMLPMEMLKLFKSLSDAAEAYMKKKEEEK.

A helical transmembrane segment spans residues 7–27 (FFVTSIILLFILIFLASAIKI). Coiled-coil stretches lie at residues 125–152 (GQAH…EATD) and 178–213 (RQAE…ISEH).

Belongs to the band 7/mec-2 family. Homotrimer. Interacts with PH1510 and is cleaved by PH1510.

It is found in the membrane. This chain is Stomatin homolog PH1511, found in Pyrococcus horikoshii (strain ATCC 700860 / DSM 12428 / JCM 9974 / NBRC 100139 / OT-3).